The sequence spans 439 residues: MDLVSRIENLPIGKFHYTLLWVVGLGWMFDALDTGIIAFIMTTLVKDWALTPAESGWIVSIGFIGMALGAVFSGGLADRFGRKTVFATTLLIYSLATAACAFAPNLTWLLAFRFIVGLGLGGQLPVAVTLVSEYIPAHVRGRFIVLLESFWGLGWLVAALVSYFVIPHFGWHIAFLIGGLPAIYVYVIIKKVPESIPYLINRGRIDEAHELVQQIERHAGVPVIDTIVVKPVAQKQQVSFRQLWSGRFARRSLMLWLVWFGIVFSYYGIFTWLPSLLVKQGYSVVQSFEYVLIMILAQLPGYISAAWLVERLGRKATLAGFIGACAISAYFFGQADTVFNIMVWGCLLSFFNLGAWGVLYTYTPEQYPANIRAFGAGWASAVGRMGGIAAPIVVTHMMVAHDGFHQVFMMFTLVLLAVAAVIVILGEETQGKTLESIGL.

The next 12 helical transmembrane spans lie at 20–40, 57–77, 84–104, 108–128, 143–163, 169–189, 253–273, 288–308, 316–336, 338–358, 374–394, and 407–427; these read LWVV…IAFI, WIVS…GGLA, TVFA…AFAP, WLLA…PVAV, FIVL…LVSY, FGWH…YVII, LMLW…FTWL, FEYV…AAWL, ATLA…GQAD, VFNI…AWGV, FGAG…PIVV, and VFMM…ILGE.

This sequence belongs to the major facilitator superfamily. Sugar transporter (TC 2.A.1.1) family.

It localises to the cell inner membrane. Its function is as follows. Functions as a high-affinity transporter of niacin (nicotinamide or nicotinate). Probably substantially contributes to niacin transport when its concentration in the medium is very low. This Acinetobacter baylyi (strain ATCC 33305 / BD413 / ADP1) protein is Niacin transporter NiaP.